An 846-amino-acid polypeptide reads, in one-letter code: Leucine--tRNA ligase (846 aa).

The short motif at 47-57 (PYPSGRIHMGH) is the 'HIGH' region element. The 'KMSKS' region signature appears at 621–625 (KMSKS). Lysine 624 contributes to the ATP binding site.

This sequence belongs to the class-I aminoacyl-tRNA synthetase family.

The protein localises to the cytoplasm. It carries out the reaction tRNA(Leu) + L-leucine + ATP = L-leucyl-tRNA(Leu) + AMP + diphosphate. This Zymomonas mobilis subsp. mobilis (strain ATCC 31821 / ZM4 / CP4) protein is Leucine--tRNA ligase.